The sequence spans 124 residues: Secretion system apparatus protein SsaP (124 aa).

In Salmonella typhi, this protein is Secretion system apparatus protein SsaP (ssaP).